The sequence spans 687 residues: UvrABC system protein B (687 aa).

Positions 26 to 414 (EGLAAGEMYQ…GAVIEQVVRP (389 aa)) constitute a Helicase ATP-binding domain. 39–46 (GVTGSGKT) contacts ATP. Positions 92 to 115 (YYDYYQPEAYVPASDTYIGKDASV) match the Beta-hairpin motif. The Helicase C-terminal domain maps to 430–596 (QVDDLLSEIR…GIQKAVREII (167 aa)). Residues 630–665 (AKRLQQLERQMHKHAQNLEFEQAARLRDEIKRIKGW) form the UVR domain.

This sequence belongs to the UvrB family. Forms a heterotetramer with UvrA during the search for lesions. Interacts with UvrC in an incision complex.

The protein resides in the cytoplasm. Functionally, the UvrABC repair system catalyzes the recognition and processing of DNA lesions. A damage recognition complex composed of 2 UvrA and 2 UvrB subunits scans DNA for abnormalities. Upon binding of the UvrA(2)B(2) complex to a putative damaged site, the DNA wraps around one UvrB monomer. DNA wrap is dependent on ATP binding by UvrB and probably causes local melting of the DNA helix, facilitating insertion of UvrB beta-hairpin between the DNA strands. Then UvrB probes one DNA strand for the presence of a lesion. If a lesion is found the UvrA subunits dissociate and the UvrB-DNA preincision complex is formed. This complex is subsequently bound by UvrC and the second UvrB is released. If no lesion is found, the DNA wraps around the other UvrB subunit that will check the other stand for damage. The chain is UvrABC system protein B from Nitrosococcus oceani (strain ATCC 19707 / BCRC 17464 / JCM 30415 / NCIMB 11848 / C-107).